Reading from the N-terminus, the 267-residue chain is Tryptophan synthase alpha chain (267 aa).

Catalysis depends on proton acceptor residues glutamate 49 and aspartate 60.

Belongs to the TrpA family. In terms of assembly, tetramer of two alpha and two beta chains.

It carries out the reaction (1S,2R)-1-C-(indol-3-yl)glycerol 3-phosphate + L-serine = D-glyceraldehyde 3-phosphate + L-tryptophan + H2O. Its pathway is amino-acid biosynthesis; L-tryptophan biosynthesis; L-tryptophan from chorismate: step 5/5. Its function is as follows. The alpha subunit is responsible for the aldol cleavage of indoleglycerol phosphate to indole and glyceraldehyde 3-phosphate. The polypeptide is Tryptophan synthase alpha chain (Citrifermentans bemidjiense (strain ATCC BAA-1014 / DSM 16622 / JCM 12645 / Bem) (Geobacter bemidjiensis)).